The chain runs to 338 residues: Ribosomal RNA small subunit methyltransferase H (338 aa).

Residues 53–55 (GGH), Asp72, Tyr99, Asp123, and Gln130 contribute to the S-adenosyl-L-methionine site. Disordered regions lie at residues 276–297 (EITPRSKSKSPEGLPVELPGMG) and 304–323 (TRGAERASEQEVEENPRSAP).

Belongs to the methyltransferase superfamily. RsmH family.

It is found in the cytoplasm. The catalysed reaction is cytidine(1402) in 16S rRNA + S-adenosyl-L-methionine = N(4)-methylcytidine(1402) in 16S rRNA + S-adenosyl-L-homocysteine + H(+). Its function is as follows. Specifically methylates the N4 position of cytidine in position 1402 (C1402) of 16S rRNA. In Rhodococcus jostii (strain RHA1), this protein is Ribosomal RNA small subunit methyltransferase H.